The primary structure comprises 395 residues: Allantoicase (395 aa).

It belongs to the allantoicase family.

It carries out the reaction allantoate + H2O = (S)-ureidoglycolate + urea. It functions in the pathway nitrogen metabolism; (S)-allantoin degradation; (S)-ureidoglycolate from allantoate (aminidohydrolase route): step 1/1. Functionally, utilization of purines as secondary nitrogen sources, when primary sources are limiting. This chain is Allantoicase (allc), found in Danio rerio (Zebrafish).